The following is a 322-amino-acid chain: 5'-AMP-activated protein kinase subunit gamma (322 aa).

CBS domains follow at residues 37–97, 118–181, 194–253, and 262–322; these read VSYR…NPDK, VDQL…CRET, ITQD…YNDL, and MRRS…LGSN. ADP contacts are provided by residues isoleucine 42, arginine 146, 166-169, and threonine 195; that span reads TQYR. AMP contacts are provided by residues threonine 195, lysine 200, and 221 to 222; that span reads SS. ATP-binding positions include threonine 195, lysine 200, and 221 to 222; that span reads SS. ADP contacts are provided by residues 221–222, 291–293, and 309–312; these read SS, RVH, and TLSD. 309-312 lines the AMP pocket; the sequence is TLSD. 309–312 is an ATP binding site; sequence TLSD.

This sequence belongs to the 5'-AMP-activated protein kinase gamma subunit family. In terms of assembly, AMPK is a heterotrimer of an alpha catalytic subunit (SNF1), a beta (SIP1, SIP2 or GAL83) and a gamma non-catalytic subunits (SNF4). Note=Interaction between SNF1 and SNF4 is inhibited by high levels of glucose.

Its subcellular location is the nucleus. It localises to the cytoplasm. In terms of biological role, adenine nucleotides-binding subunit gamma of AMP-activated protein kinase (AMPK), an energy sensor protein kinase that plays a key role in regulating cellular energy metabolism. In response to reduction of intracellular ATP levels, AMPK activates energy-producing pathways and inhibits energy-consuming processes: inhibits protein, carbohydrate and lipid biosynthesis, as well as cell growth and proliferation. AMPK acts via direct phosphorylation of metabolic enzymes, and by longer-term effects via phosphorylation of transcription regulators. Gamma non-catalytic subunit mediates binding to AMP, ADP and ATP, leading to activate or inhibit AMPK: AMP-binding results in allosteric activation of alpha catalytic subunit (SNF1) both by inducing phosphorylation and preventing dephosphorylation of catalytic subunits. The polypeptide is 5'-AMP-activated protein kinase subunit gamma (SNF4) (Saccharomyces cerevisiae (strain ATCC 204508 / S288c) (Baker's yeast)).